We begin with the raw amino-acid sequence, 601 residues long: Elongation factor 4 (601 aa).

The 183-residue stretch at 6 to 188 (SHIRNFSIIA…QIVHRVPPPE (183 aa)) folds into the tr-type G domain. Residues 18–23 (DHGKST) and 135–138 (NKID) each bind GTP.

It belongs to the TRAFAC class translation factor GTPase superfamily. Classic translation factor GTPase family. LepA subfamily.

It is found in the cell inner membrane. It catalyses the reaction GTP + H2O = GDP + phosphate + H(+). In terms of biological role, required for accurate and efficient protein synthesis under certain stress conditions. May act as a fidelity factor of the translation reaction, by catalyzing a one-codon backward translocation of tRNAs on improperly translocated ribosomes. Back-translocation proceeds from a post-translocation (POST) complex to a pre-translocation (PRE) complex, thus giving elongation factor G a second chance to translocate the tRNAs correctly. Binds to ribosomes in a GTP-dependent manner. The protein is Elongation factor 4 of Anaeromyxobacter dehalogenans (strain 2CP-C).